The chain runs to 523 residues: MSNRVIIFDTTLRDGEQALAASLTVKEKLQIALSLERLGVDVMEVGFPVSSPGDFESVQTIARTIKNSRVCALARALEKDIDAAAQSLSVAEQFRIHTFISTSTIHVESKLKRSFDQVLDMAVGAVKYARRFTDDVEFSCEDAGRTPIDNLCRMVEAAIKAGAKTINIPDTVGYTVPSEFGGIIQNLFDRVPNIDQAVISVHCHDDLGLSVANSITAVQHGARQIECTVNGIGERAGNCSLEEIAMIIATRKASLGLETGINAKEIHRTSNLVSQLCNMPVQANKAIVGANAFTHSSGIHQDGVLKSQNTYEIMTPESIGLNRNNLNMTSRSGRHVIKHRMEEMGYGEQDYDMDTLYEAFLKLADKKGQVFDYDLEALVYVEAQAEDENHYGLQQLVVHSDSTQGQATATVTLSIDGKAVTEAATGNGPVDAAYKAIARASGCEINISSYQLSAKGQGQDALGQVDITAKYHDQSFHGVGLATDVVEASAAALIHVMNLTWRADKVAENKHKLKQARTELGGV.

Residues 5 to 267 (VIIFDTTLRD…ETGINAKEIH (263 aa)) enclose the Pyruvate carboxyltransferase domain. Residues Asp14, His202, His204, and Asn238 each contribute to the Mn(2+) site. A regulatory domain region spans residues 392 to 523 (GLQQLVVHSD…KQARTELGGV (132 aa)).

Belongs to the alpha-IPM synthase/homocitrate synthase family. LeuA type 1 subfamily. As to quaternary structure, homodimer. Mn(2+) serves as cofactor.

It is found in the cytoplasm. It carries out the reaction 3-methyl-2-oxobutanoate + acetyl-CoA + H2O = (2S)-2-isopropylmalate + CoA + H(+). It participates in amino-acid biosynthesis; L-leucine biosynthesis; L-leucine from 3-methyl-2-oxobutanoate: step 1/4. Catalyzes the condensation of the acetyl group of acetyl-CoA with 3-methyl-2-oxobutanoate (2-ketoisovalerate) to form 3-carboxy-3-hydroxy-4-methylpentanoate (2-isopropylmalate). This is 2-isopropylmalate synthase from Shewanella loihica (strain ATCC BAA-1088 / PV-4).